Here is a 190-residue protein sequence, read N- to C-terminus: Guanylate kinase (190 aa).

In terms of domain architecture, Guanylate kinase-like spans 8–188; it reads GRLVILAGPS…AVSAIKAVLL (181 aa). Residue 15 to 22 participates in ATP binding; it reads GPSAVGKS.

The protein belongs to the guanylate kinase family.

It is found in the cytoplasm. The catalysed reaction is GMP + ATP = GDP + ADP. In terms of biological role, essential for recycling GMP and indirectly, cGMP. This chain is Guanylate kinase, found in Corynebacterium efficiens (strain DSM 44549 / YS-314 / AJ 12310 / JCM 11189 / NBRC 100395).